Here is an 845-residue protein sequence, read N- to C-terminus: AdoMet-dependent rRNA methyltransferase SPB1 (845 aa).

S-adenosyl-L-methionine contacts are provided by Gly-58, Trp-60, Asp-78, Asp-94, and Asp-119. Lys-159 (proton acceptor) is an active-site residue. 2 disordered regions span residues Gly-223 to Gln-247 and Ser-279 to His-298. Coiled-coil stretches lie at residues Thr-366–Ile-402 and Asp-464–Ala-502. The segment covering Arg-496–Asp-512 has biased composition (basic and acidic residues). Disordered regions lie at residues Arg-496–Glu-546, Glu-587–Lys-660, and Lys-788–Lys-821. Acidic residues-rich tracts occupy residues Ala-513–Val-528, Met-536–Asp-545, Asn-610–Phe-624, and Asp-633–Val-648. Positions Ile-739 to Lys-796 form a coiled coil. Positions Lys-788–Pro-797 are enriched in basic residues.

Belongs to the class I-like SAM-binding methyltransferase superfamily. RNA methyltransferase RlmE family. SPB1 subfamily. As to quaternary structure, component of the nucleolar and nucleoplasmic pre-60S ribosomal particle.

The protein localises to the nucleus. The protein resides in the nucleolus. It carries out the reaction a ribonucleotide in rRNA + S-adenosyl-L-methionine = a 2'-O-methylribonucleotide in rRNA + S-adenosyl-L-homocysteine + H(+). Functionally, required for proper assembly of pre-ribosomal particles during the biogenesis of the 60S ribosomal subunit. The protein is AdoMet-dependent rRNA methyltransferase SPB1 of Candida albicans (strain SC5314 / ATCC MYA-2876) (Yeast).